Here is a 173-residue protein sequence, read N- to C-terminus: Alpha-crystallin A chain (173 aa).

At Met-1 the chain carries N-acetylmethionine. Residues 1 to 63 (MDVTIQHPWF…RTVLDSGISE (63 aa)) form a required for complex formation with BFSP1 and BFSP2 region. A Deamidated glutamine; partial modification is found at Gln-6. Ser-45 carries the phosphoserine modification. Gln-50 carries the post-translational modification Deamidated glutamine; partial. In terms of domain architecture, sHSP spans 52–162 (LFRTVLDSGI…GHSERAIPVS (111 aa)). Lys-99 carries the N6-acetyllysine modification. Residue His-100 coordinates Zn(2+). Residue Asn-101 is modified to Deamidated asparagine; partial. Zn(2+) contacts are provided by Glu-102 and His-107. Phosphoserine is present on Ser-122. A Deamidated asparagine; partial modification is found at Asn-123. A disulfide bond links Cys-131 and Cys-142. The interval 146 to 173 (VQSSMDDGHSERAIPVSREEKPSSVPSS) is disordered. Gln-147 is modified (deamidated glutamine; partial). The segment covering 151-167 (DDGHSERAIPVSREEKP) has biased composition (basic and acidic residues). Residue His-154 coordinates Zn(2+). A glycan (O-linked (GlcNAc) serine) is linked at Ser-162.

This sequence belongs to the small heat shock protein (HSP20) family. In terms of assembly, heteromer composed of three CRYAA and one CRYAB subunits. Inter-subunit bridging via zinc ions enhances stability, which is crucial as there is no protein turn over in the lens. Can also form homodimers and homotetramers (dimers of dimers) which serve as the building blocks of homooligomers. Within homooligomers, the zinc-binding motif is created from residues of 3 different molecules. His-100 and Glu-102 from one molecule are ligands of the zinc ion, and His-107 and His-154 residues from additional molecules complete the site with tetrahedral coordination geometry. Part of a complex required for lens intermediate filament formation composed of BFSP1, BFSP2 and CRYAA. In terms of processing, undergoes age-dependent proteolytical cleavage at the C-terminus.

The protein localises to the cytoplasm. The protein resides in the nucleus. Functionally, contributes to the transparency and refractive index of the lens. In its oxidized form (absence of intramolecular disulfide bond), acts as a chaperone, preventing aggregation of various proteins under a wide range of stress conditions. Required for the correct formation of lens intermediate filaments as part of a complex composed of BFSP1, BFSP2 and CRYAA. The chain is Alpha-crystallin A chain (CRYAA) from Orycteropus afer (Aardvark).